Consider the following 127-residue polypeptide: Classical arabinogalactan protein 10 (127 aa).

A signal peptide spans 1 to 21 (MASKSVVVLLFLALIASSAIA). Glutamine 22 is subject to Pyrrolidone carboxylic acid. The segment at 22 to 107 (QAPGPAPTRS…TGSTPVDNNN (86 aa)) is disordered. A 4-hydroxyproline mark is found at proline 24, proline 26, proline 28, proline 32, and proline 36. 5 O-linked (Ara...) hydroxyproline glycosylation sites follow: proline 24, proline 26, proline 28, proline 32, and proline 36. Composition is skewed to pro residues over residues 25–39 (GPAPTRSPLPSPAQP), 48–58 (SITPTPTPTPS), and 66–86 (VSPPAGSPLPSSASPPAPPTS). A compositionally biased stretch (polar residues) spans 98–107 (TGSTPVDNNN). Residue asparagine 107 is the site of GPI-anchor amidated asparagine attachment. Residues 108-127 (AATLAAGSLAGFVFVASLLL) constitute a propeptide, removed in mature form.

It belongs to the classical AGP family. Post-translationally, O-glycosylated on hydroxyprolines; noncontiguous hydroxylproline residues are glycosylated with arabinogalactan. Predominantly expressed in flowers and at a lower level in roots and siliques.

The protein resides in the cell membrane. Functionally, proteoglycan that seems to be implicated in diverse developmental roles such as differentiation, cell-cell recognition, embryogenesis and programmed cell death. The protein is Classical arabinogalactan protein 10 (AGP10) of Arabidopsis thaliana (Mouse-ear cress).